The primary structure comprises 1986 residues: Protein Shroom3 (1986 aa).

The tract at residues 1–21 is disordered; the sequence is MKTPENLEEPSATPNPSRTPT. One can recognise a PDZ domain in the interval 24–109; it reads FVYLEALLEG…TLRLVVRRDV (86 aa). 5 disordered regions span residues 152–199, 211–239, 265–285, 342–463, and 564–1055; these read CSEP…SSTS, RSPD…LLSP, TSSS…RSGS, QGCA…QPLL, and NEDS…RRIF. Ser212 is modified (phosphoserine). Polar residues-rich tracts occupy residues 357–376 and 415–425; these read PSPS…TDNL and PQTNSSGSQKT. Basic and acidic residues predominate over residues 430 to 440; sequence DQLHTVPERSP. Residues Ser439 and Ser443 each carry the phosphoserine modification. Positions 595-607 are enriched in polar residues; that stretch reads ACSNHHSLSSPQA. Positions 630–645 are enriched in basic and acidic residues; that stretch reads QEDHNANLRQKVEREG. The span at 653–677 shows a compositional bias: polar residues; that stretch reads NSGRTRSAFSSLQNIPESLRRQSNV. The span at 747-761 shows a compositional bias: low complexity; the sequence is SGASQRRLSSSSSAA. Positions 774-785 are enriched in basic and acidic residues; it reads KVSRIEEREQGR. 2 stretches are compositionally biased toward low complexity: residues 796–814 and 865–874; these read YGPG…TSSS and DGRGPPARGG. Ser888 bears the Phosphoserine mark. Over residues 895-908 the composition is skewed to basic and acidic residues; it reads EAEREASWSEDRPG. Thr909 bears the Phosphothreonine mark. Phosphoserine occurs at positions 912 and 969. An ASD1 domain is found at 927-1023; the sequence is IKDAQSRVLG…SEPEKMNEVG (97 aa). Over residues 1004-1020 the composition is skewed to basic and acidic residues; the sequence is LTVEQKKRSYSEPEKMN. Phosphoserine is present on residues Ser1063 and Ser1066. Disordered regions lie at residues 1083-1102, 1107-1223, 1304-1425, and 1446-1654; these read YIQR…PEAG, AQSA…AEDL, ATVA…PPWV, and ANLK…KTSE. Low complexity predominate over residues 1114–1127; sequence AGPAAPDGPGLASA. A compositionally biased stretch (basic and acidic residues) spans 1134 to 1146; that stretch reads REPEALPRKEHTH. 3 positions are modified to phosphoserine: Trp1175, Val1179, and Ser1219. Over residues 1307-1318 the composition is skewed to low complexity; the sequence is ASSAPPESSGAA. Phosphoserine occurs at positions 1350 and 1354. Residues 1366 to 1399 show a composition bias toward polar residues; that stretch reads YRSQLAMDQQTGQQPPSSPASAVTQPTSPRSPEL. A compositionally biased stretch (low complexity) spans 1455–1469; that stretch reads PSRPSSCSTSDPDTP. The span at 1513 to 1524 shows a compositional bias: pro residues; it reads LPPPPPPSPPSE. The span at 1581–1630 shows a compositional bias: polar residues; that stretch reads EGSQIMTATPPQTSAKGSEAESNTPSSASAQPQLNGSPGKQLCPSQTRNL. Residues 1634 to 1654 are compositionally biased toward basic and acidic residues; sequence PVERTQDLGKKTHAEPQKTSE. Positions 1659-1947 constitute an ASD2 domain; the sequence is EALAKEIVHQ…QVRCLLESLP (289 aa). A coiled-coil region spans residues 1844–1890; sequence RLARVENVLRGLGEDASKEERSSLNEKRKVLAGQHEDARELKENLDR.

This sequence belongs to the shroom family. Interacts with F-actin. Interacts with ROCK1.

The protein resides in the cell junction. Its subcellular location is the adherens junction. It localises to the cytoplasm. The protein localises to the cytoskeleton. It is found in the apical cell membrane. Controls cell shape changes in the neuroepithelium during neural tube closure. Induces apical constriction in epithelial cells by promoting the apical accumulation of F-actin and myosin II, and probably by bundling stress fibers. Induces apicobasal cell elongation by redistributing gamma-tubulin and directing the assembly of robust apicobasal microtubule arrays. The sequence is that of Protein Shroom3 (Shroom3) from Mus musculus (Mouse).